The chain runs to 255 residues: Electron transfer flavoprotein beta subunit lysine methyltransferase (255 aa).

The N-terminal 32 residues, 1–32 (MAFSLCWKAPRSPWSFLQAVNNGSPLFLWRTV), are a transit peptide targeting the mitochondrion.

It belongs to the methyltransferase superfamily. ETFBKMT family. Interacts with HSPD1; this protein may possibly be a methylation substrate.

Its subcellular location is the cytoplasm. The protein localises to the mitochondrion matrix. It carries out the reaction L-lysyl-[protein] + 3 S-adenosyl-L-methionine = N(6),N(6),N(6)-trimethyl-L-lysyl-[protein] + 3 S-adenosyl-L-homocysteine + 3 H(+). In terms of biological role, protein-lysine methyltransferase that selectively trimethylates the flavoprotein ETFB in mitochondria. Thereby, may negatively regulate the function of ETFB in electron transfer from Acyl-CoA dehydrogenases. The protein is Electron transfer flavoprotein beta subunit lysine methyltransferase of Mus musculus (Mouse).